The chain runs to 329 residues: Calponin-3 (329 aa).

Position 23 is an N6-acetyllysine (K23). Positions 26-130 constitute a Calponin-homology (CH) domain; it reads HQAEEDLRNW…TLVALAGLAK (105 aa). K158 is subject to N6-methyllysine. 3 Calponin-like repeats span residues 164 to 189, 204 to 229, and 243 to 268; these read IGLQ…RHLY, ISLQ…RDIY, and ISLQ…RQVY. Residues 280–329 are disordered; that stretch reads VIHNGSQGTGTNGSEISDSDYQAEYPDEYHGEYQDDYPRDYQYGDQGIDY. A compositionally biased stretch (basic and acidic residues) spans 306–318; sequence DEYHGEYQDDYPR.

It belongs to the calponin family.

Functionally, thin filament-associated protein that is implicated in the regulation and modulation of smooth muscle contraction. It is capable of binding to actin, calmodulin and tropomyosin. The interaction of calponin with actin inhibits the actomyosin Mg-ATPase activity. This chain is Calponin-3 (CNN3), found in Bos taurus (Bovine).